The following is a 198-amino-acid chain: Ribonuclease 3-like protein 1 (198 aa).

The segment covering 85–110 has biased composition (basic and acidic residues); the sequence is KKLAPKPDEEHTTTTKPISKDDESKT. Residues 85–115 form a disordered region; the sequence is KKLAPKPDEEHTTTTKPISKDDESKTRRGSA. The DRBM domain maps to 114 to 191; that stretch reads SAKSVLHEMC…AEGALWYLEH (78 aa).

In Arabidopsis thaliana (Mouse-ear cress), this protein is Ribonuclease 3-like protein 1 (RTL1).